A 97-amino-acid chain; its full sequence is Glutamyl-tRNA(Gln) amidotransferase subunit C (97 aa).

This sequence belongs to the GatC family. In terms of assembly, heterotrimer of A, B and C subunits.

The enzyme catalyses L-glutamyl-tRNA(Gln) + L-glutamine + ATP + H2O = L-glutaminyl-tRNA(Gln) + L-glutamate + ADP + phosphate + H(+). It catalyses the reaction L-aspartyl-tRNA(Asn) + L-glutamine + ATP + H2O = L-asparaginyl-tRNA(Asn) + L-glutamate + ADP + phosphate + 2 H(+). In terms of biological role, allows the formation of correctly charged Asn-tRNA(Asn) or Gln-tRNA(Gln) through the transamidation of misacylated Asp-tRNA(Asn) or Glu-tRNA(Gln) in organisms which lack either or both of asparaginyl-tRNA or glutaminyl-tRNA synthetases. The reaction takes place in the presence of glutamine and ATP through an activated phospho-Asp-tRNA(Asn) or phospho-Glu-tRNA(Gln). The protein is Glutamyl-tRNA(Gln) amidotransferase subunit C of Sulfurisphaera tokodaii (strain DSM 16993 / JCM 10545 / NBRC 100140 / 7) (Sulfolobus tokodaii).